Reading from the N-terminus, the 1214-residue chain is Sodium bicarbonate cotransporter 3 (1214 aa).

A compositionally biased stretch (basic and acidic residues) spans 1–12 (MERFRLEKKLPG). Disordered stretches follow at residues 1-22 (MERF…VDLG) and 52-93 (SKES…PSQR). The Extracellular portion of the chain corresponds to 1-608 (MERFRLEKKL…DFKDALSLQC (608 aa)). Residues Ser-52, Ser-55, Ser-84, Ser-150, Leu-165, and Cys-168 each carry the phosphoserine modification. Basic residues predominate over residues 55 to 72 (SRRRHRHRGHKHHHRRRK). The span at 73–85 (DKESDKEDGRESP) shows a compositional bias: basic and acidic residues. The N-linked (GlcNAc...) asparagine glycan is linked to Asn-171. Phosphoserine occurs at positions 233, 242, 255, 258, 260, 263, 264, and 267. Asn-269 carries N-linked (GlcNAc...) asparagine glycosylation. 3 disordered regions span residues 289–346 (SRAG…IPTV), 362–408 (EEQK…ENST), and 552–572 (FHNG…HHAG). Pro residues predominate over residues 303–313 (VPTPQNSPPSS). Low complexity predominate over residues 314–332 (PSISRLTSRSSQESQRQAP). Polar residues predominate over residues 379-392 (SPQSAPGNLDNSKS). The residue at position 382 (Ser-382) is a Phosphoserine. Asn-398 carries an N-linked (GlcNAc...) asparagine glycan. Ser-400 and Ser-403 each carry phosphoserine. Asn-406 carries an N-linked (GlcNAc...) asparagine glycan. Ser-407 and Ser-556 each carry phosphoserine. Thr-557 carries the post-translational modification Phosphothreonine. Positions 563–572 (TPKEAAHHAG) are enriched in basic and acidic residues. Residues 609–629 (LASILFLYCACMSPVITFGGL) form a helical membrane-spanning segment. Topologically, residues 630–637 (LGEATEGR) are cytoplasmic. Residues 638–658 (ISAIESLFGASLTGIAYSLFA) traverse the membrane as a helical segment. Residues 659–695 (GQPLTILGSTGPVLVFEKILYKFCRDYQLSYLSLRTS) are Extracellular-facing. A helical transmembrane segment spans residues 696-716 (IGLWTSFLCIVLVATDASSLV). At 717–725 (CYITRFTEE) the chain is on the cytoplasmic side. The chain crosses the membrane as a helical span at residues 726–746 (AFAALICIIFIYEALEKLFDL). At Lys-742 the chain carries Phosphoserine. At 747–817 (GETYAFNMHN…VFLGSACGHH (71 aa)) the chain is on the extracellular side. Cys-766 and Cys-768 are oxidised to a cystine. 2 positions are modified to phosphoserine: Pro-771 and Pro-774. Asn-776 carries N-linked (GlcNAc...) asparagine glycosylation. A Phosphoserine modification is found at Ala-780. Asn-786 and Asn-791 each carry an N-linked (GlcNAc...) asparagine glycan. A disulfide bond links Cys-802 and Cys-814. The helical transmembrane segment at 818-838 (GPYIPDVLFWCVILFFTTFFL) threads the bilayer. At 839-861 (SSFLKQFKTKRYFPTKVRSTISD) the chain is on the cytoplasmic side. Residues 862–882 (FAVFLTIVIMVTIDYLVGVPS) form a helical membrane-spanning segment. Topologically, residues 883-908 (PKLHVPEKFEPTHPERGWIISPLGDN) are extracellular. Residues 909 to 929 (PWWTLLIAAIPALLCTILIFM) form a helical membrane-spanning segment. Residues 930 to 954 (DQQITAVIINRKEHKLKKGAGYHLD) are Cytoplasmic-facing. A helical transmembrane segment spans residues 955-975 (LLMVGVMLGVCSVMGLPWFVA). Residues 976–1011 (ATVLSISHVNSLKVESECSAPGEQPKFLGIREQRVT) are Extracellular-facing. A phosphoserine mark is found at Glu-1007, Val-1010, and Phe-1016. Essential for cell membrane localization and transport activity regions lie at residues 1008–1131 (QRVT…KREL) and 1127–1214 (TKRE…ETSL). A helical membrane pass occupies residues 1012-1032 (GLMIFILMGLSVFMTSVLKFI). At 1033–1034 (PM) the chain is on the cytoplasmic side. A helical transmembrane segment spans residues 1035–1055 (PVLYGVFLYMGVSSLKGIQLF). Topologically, residues 1056-1092 (DRIKLFGMPAKHQPDLIYLRYVPLWKVHIFTVIQLTC) are extracellular. Residues Tyr-1073, Val-1077, Ser-1102, Ala-1105, Val-1106, Pro-1109, Met-1111, and Leu-1115 each carry the phosphoserine modification. Residues 1093–1113 (LVLLWVIKVSAAAVVFPMMVL) traverse the membrane as a helical segment. The Cytoplasmic portion of the chain corresponds to 1114–1214 (ALVFVRKLMD…KKYVDAETSL (101 aa)). A CA2-binding region spans residues 1134–1136 (LDD). Over residues 1144-1162 (KKEDDKKKKEKEEAERMLQ) the composition is skewed to basic and acidic residues. A disordered region spans residues 1144–1169 (KKEDDKKKKEKEEAERMLQDDDDTVH). Thr-1167 carries the phosphothreonine modification. Ser-1176, Ser-1188, Asp-1201, and Ser-1213 each carry phosphoserine. Positions 1211–1214 (ETSL) match the PDZ-binding motif.

The protein belongs to the anion exchanger (TC 2.A.31) family. In terms of assembly, interacts with CFTR through NHERF1/EBP50. Interacts with USH1C. Forms a complex with ATP6V1B1 and NHERF1/EBP50. Interacts in a pH dependent-manner with CA2/carbonic anhydrase 2. In terms of tissue distribution, highly expressed in testis and spleen. Also expressed in retina, colon, small intestine, ovary, thymus, prostate, muscle, heart and kidney. As to expression, expressed in skeletal muscle and heart muscle.

It is found in the basolateral cell membrane. The protein localises to the apical cell membrane. Its subcellular location is the cell projection. It localises to the stereocilium. The protein resides in the cell membrane. The catalysed reaction is hydrogencarbonate(in) + Na(+)(in) = hydrogencarbonate(out) + Na(+)(out). With respect to regulation, transporter activity is regulated by CA2/carbonic anhydrase 2, cAMP and PKA. Insensitive to stilbene derivatives. Inhibited by 5-(N-ethyl-N-isopropyl)-amiloride (EIPA). Functionally, electroneutral sodium- and bicarbonate-dependent cotransporter with a Na(+):HCO3(-) 1:1 stoichiometry. Mediates the sodium-dependent bicarbonate transport important for pH recovery after acid load as well as for regulation of steady-state pH in the duodenum and vascular smooth muscle cells. Plays a key role in macrophage acidification, mediating bicarbonate import into the cytoplasm which is crucial for net acid extrusion and maintenance of cytoplasmic pH during phagocytosis. Provides cellular bicarbonate for de novo purine and pyrimidine synthesis and is a key mediator of de novo nucleotide synthesis downstream of mTORC1 signaling in proliferating cells. In terms of biological role, plays a key role in macrophage acidification, mediating bicarbonate import into the cytoplasm which is crucial for net acid extrusion and maintenance of cytoplasmic pH during phagocytosis. This is Sodium bicarbonate cotransporter 3 (SLC4A7) from Homo sapiens (Human).